The primary structure comprises 1008 residues: Translation initiation factor IF-2 (1008 aa).

3 disordered regions span residues Ala113–Val136, Asp153–Pro235, and Gly253–Asp405. 2 stretches are compositionally biased toward basic and acidic residues: residues Asp153–Pro180 and Pro189–Thr213. Low complexity-rich tracts occupy residues Gly294–Gln329 and Gly342–Pro358. Residues Ala365–Lys381 show a composition bias toward basic and acidic residues. The tr-type G domain maps to Asp507–Lys677. Residues Gly516–Thr523 are G1. Gly516–Thr523 is a GTP binding site. The interval Gly541–His545 is G2. The segment at Asp563–Gly566 is G3. GTP is bound by residues Asp563 to His567 and Asn617 to Asp620. The tract at residues Asn617–Asp620 is G4. Residues Ser653 to Lys655 are G5.

It belongs to the TRAFAC class translation factor GTPase superfamily. Classic translation factor GTPase family. IF-2 subfamily.

Its subcellular location is the cytoplasm. Functionally, one of the essential components for the initiation of protein synthesis. Protects formylmethionyl-tRNA from spontaneous hydrolysis and promotes its binding to the 30S ribosomal subunits. Also involved in the hydrolysis of GTP during the formation of the 70S ribosomal complex. The protein is Translation initiation factor IF-2 of Cytophaga hutchinsonii (strain ATCC 33406 / DSM 1761 / CIP 103989 / NBRC 15051 / NCIMB 9469 / D465).